A 186-amino-acid chain; its full sequence is MDATVTVVGNLTADPELRYTATGAAVVNMTIASTPRMYDRQSGEWKDGEPLFLRGILWREYAINAAASLAKGMRVVAVGKLKQRNYETREGDRRTSVELEIDEIGPTLRYATAKCSRATQAGHGVSPDPWADSQTGQGIDSHTTRSEEITENAKNGEGAGKNELNKKVLVGDNVSYEDFDSDEVPF.

In terms of domain architecture, SSB spans 1 to 108; sequence MDATVTVVGN…LEIDEIGPTL (108 aa). A disordered region spans residues 120–186; the sequence is QAGHGVSPDP…EDFDSDEVPF (67 aa). Polar residues predominate over residues 132–141; that stretch reads DSQTGQGIDS. Over residues 175 to 186 the composition is skewed to acidic residues; that stretch reads SYEDFDSDEVPF.

Homotetramer.

The chain is Single-stranded DNA-binding protein 1 (ssb1) from Tropheryma whipplei (strain TW08/27) (Whipple's bacillus).